The chain runs to 262 residues: Phosphatidylserine decarboxylase proenzyme (262 aa).

Catalysis depends on charge relay system; for autoendoproteolytic cleavage activity residues aspartate 86, histidine 142, and serine 226. The active-site Schiff-base intermediate with substrate; via pyruvic acid; for decarboxylase activity is the serine 226. Serine 226 is subject to Pyruvic acid (Ser); by autocatalysis.

Belongs to the phosphatidylserine decarboxylase family. PSD-B subfamily. Prokaryotic type I sub-subfamily. As to quaternary structure, heterodimer of a large membrane-associated beta subunit and a small pyruvoyl-containing alpha subunit. Pyruvate is required as a cofactor. Post-translationally, is synthesized initially as an inactive proenzyme. Formation of the active enzyme involves a self-maturation process in which the active site pyruvoyl group is generated from an internal serine residue via an autocatalytic post-translational modification. Two non-identical subunits are generated from the proenzyme in this reaction, and the pyruvate is formed at the N-terminus of the alpha chain, which is derived from the carboxyl end of the proenzyme. The autoendoproteolytic cleavage occurs by a canonical serine protease mechanism, in which the side chain hydroxyl group of the serine supplies its oxygen atom to form the C-terminus of the beta chain, while the remainder of the serine residue undergoes an oxidative deamination to produce ammonia and the pyruvoyl prosthetic group on the alpha chain. During this reaction, the Ser that is part of the protease active site of the proenzyme becomes the pyruvoyl prosthetic group, which constitutes an essential element of the active site of the mature decarboxylase.

Its subcellular location is the cell membrane. The catalysed reaction is a 1,2-diacyl-sn-glycero-3-phospho-L-serine + H(+) = a 1,2-diacyl-sn-glycero-3-phosphoethanolamine + CO2. The protein operates within phospholipid metabolism; phosphatidylethanolamine biosynthesis; phosphatidylethanolamine from CDP-diacylglycerol: step 2/2. In terms of biological role, catalyzes the formation of phosphatidylethanolamine (PtdEtn) from phosphatidylserine (PtdSer). In Bacillus cereus (strain AH820), this protein is Phosphatidylserine decarboxylase proenzyme.